The sequence spans 68 residues: Large ribosomal subunit protein bL32 (68 aa).

It belongs to the bacterial ribosomal protein bL32 family.

The protein is Large ribosomal subunit protein bL32 of Cereibacter sphaeroides (strain ATCC 17025 / ATH 2.4.3) (Rhodobacter sphaeroides).